The sequence spans 248 residues: MADS-box transcription factor 8 (248 aa).

Residues 1–61 (MGRGRVELKR…GKLYEFCSGQ (61 aa)) enclose the MADS-box domain. Residues 90–180 (VQSSRNEYLK…RRKLEESNQL (91 aa)) enclose the K-box domain.

May interact with the K-box of MADS6 and MADS16. May interact with MADS13 and MADS18. Binds to FCA. In terms of tissue distribution, expressed in lodicules, stamens and carpels.

It is found in the nucleus. In terms of biological role, probable transcription factor. May be involved in the control of flowering time. The protein is MADS-box transcription factor 8 (MADS8) of Oryza sativa subsp. japonica (Rice).